The sequence spans 447 residues: Elongation factor 1-alpha (447 aa).

A tr-type G domain is found at 5-230 (KIHISIVVIG…DQINEPKRPS (226 aa)). Positions 14–21 (GHVDSGKS) are G1. 14-21 (GHVDSGKS) is a binding site for GTP. Lys-55 carries the post-translational modification N6,N6-dimethyllysine. Positions 70–74 (GITID) are G2. An N6,N6,N6-trimethyllysine modification is found at Lys-79. A G3 region spans residues 91–94 (DAPG). Residues 91–95 (DAPGH) and 153–156 (NKMD) each bind GTP. The tract at residues 153 to 156 (NKMD) is G4. N6,N6,N6-trimethyllysine is present on Lys-187. Residues 194–196 (SGF) form a G5 region. Lys-261 is modified (N6-methyllysine). Residue Glu-289 is modified to 5-glutamyl glycerylphosphorylethanolamine. Lys-306 carries the N6,N6,N6-trimethyllysine modification. Glu-362 is subject to 5-glutamyl glycerylphosphorylethanolamine. Lys-396 carries the post-translational modification N6,N6,N6-trimethyllysine.

Belongs to the TRAFAC class translation factor GTPase superfamily. Classic translation factor GTPase family. EF-Tu/EF-1A subfamily.

It is found in the cytoplasm. This protein promotes the GTP-dependent binding of aminoacyl-tRNA to the A-site of ribosomes during protein biosynthesis. This chain is Elongation factor 1-alpha (BLT63), found in Hordeum vulgare (Barley).